A 286-amino-acid polypeptide reads, in one-letter code: Versiconal hemiacetal acetate esterase stcI (286 aa).

The Involved in the stabilization of the negatively charged intermediate by the formation of the oxyanion hole signature appears at 54–56 (HAG). Active-site residues include serine 123, aspartate 226, and histidine 256.

The protein belongs to the 'GDXG' lipolytic enzyme family.

The catalysed reaction is (2S,3S)-versiconal hemiacetal acetate + H2O = (2S-3S)-versiconal hemiacetal + acetate + H(+). It carries out the reaction (3S)-versiconol acetate + H2O = (S)-versiconol + acetate + H(+). The protein operates within mycotoxin biosynthesis; sterigmatocystin biosynthesis. Its function is as follows. Esterase; part of the gene cluster that mediates the biosynthesis of sterigmatocystin (ST), a polyketide-derived furanocoumarin which is part of the most toxic and carcinogenic compounds among the known mycotoxins. The first step in the biosynthesis of sterigmatocystin is the production of hexanoate by the fatty acid synthase (FAS) units stcJ and stcK. The polyketide backbone is assembled by the non-reducing polyketide synthase stcA by condensation of the starter hexanoyl-CoA and 7 malonyl-CoA extender units followed by cyclization and release of norsolorinic acid. Norsolorinic acid is the first stable intermediate in the biosynthesis of sterigmatocystin and is converted into averantin (AVN) by the ketoreductase stcE which reduces the hexanoate ketone to an alcohol. Averantin is then oxidized into 5'-hydroxyaverantin (HAVN) by the cytochrome P450 monooxygenase stcF. 5'-hydroxyaverantin is further converted to 5'-oxyaverantin (OAVN) by the 5'-hydroxyaverantin dehydrogenase stcG. The next step is the conversion of OAVN into averufin (AVF) which is catalyzed by a yet to be identified enzyme. The cytochrome P450 monooxygenase stcB and the flavin-binding monooxygenase stcW are both required for the conversion of averufin to 1-hydroxyversicolorone. The esterase stcI probably catalyzes the formation of versiconal hemiacetal acetate from 1-hydroxyversicolorone. The oxydoreductase stcN then probably catalyzes the biosynthetic step from versiconal to versicolorin B (VERB). The next step is performed by the versicolorin B desaturase stcL to produce versicolorin A (VERA). The ketoreductase stcU and the cytochrome P450 monooxygenase stcS are involved in the conversion of versicolorin A to demethylsterigmatocystin. The Baeyer-Villiger oxidas stcQ and the reductase stcR might be involved in the biosynthetic step from versicolorin A to demethylsterigmatocystin. The final step in the biosynthesis of sterigmatocystin is the methylation of demethylsterigmatocystin catalyzed by the methyltransferase stcP. The protein is Versiconal hemiacetal acetate esterase stcI of Emericella nidulans (strain FGSC A4 / ATCC 38163 / CBS 112.46 / NRRL 194 / M139) (Aspergillus nidulans).